The primary structure comprises 268 residues: DNA repair protein RecO (268 aa).

It belongs to the RecO family.

In terms of biological role, involved in DNA repair and RecF pathway recombination. This is DNA repair protein RecO from Mycobacterium leprae (strain Br4923).